Consider the following 397-residue polypeptide: MLNRKLVNRVEYFRVIVMAFAAFVFNTTEFVPVALLSDIADSFQMPVSNTGLMITIYAWIVSLCSLPCMLMTARLERRRLLISLFILFIASHILSAFAWNYEVLLIARAGVALTHSIFWSITAALTIRIAPKNKKTQALGLLALGSSLAMVLGLPLGRIIGQAFGWRTTFTLIGVFAALILILIVRLLPKIPSQNAGSLKSLPVLARRPMLITLYIFTILVISAHFTAYSYIEPFMIQIGRVSANKATAVLLIFGVSGVVASVLFSRLYRIAPIKFLLSSVAILTLALICLYGVSGISGAIFALVFIWGVAISALSLAMQMKVLQLAPDATDVATAIYSGIYNIGIGGGALIGNQVMQHLGLANIGYVGAVLGAVSIIWFILMFLKFSRVPLNIVNQ.

Helical transmembrane passes span 15 to 35 (VIVMAFAAFVFNTTEFVPVAL), 51 to 71 (GLMITIYAWIVSLCSLPCMLM), 80 to 100 (LLISLFILFIASHILSAFAWN), 103 to 123 (VLLIARAGVALTHSIFWSITA), 137 to 157 (QALGLLALGSSLAMVLGLPLG), 169 to 189 (TFTLIGVFAALILILIVRLLP), 209 to 229 (PMLITLYIFTILVISAHFTAY), 246 to 266 (KATAVLLIFGVSGVVASVLFS), 277 to 297 (LLSSVAILTLALICLYGVSGI), 299 to 319 (GAIFALVFIWGVAISALSLAM), 333 to 353 (VATAIYSGIYNIGIGGGALIG), and 365 to 385 (IGYVGAVLGAVSIIWFILMFL).

It belongs to the major facilitator superfamily. SotB (TC 2.A.1.2) family.

The protein resides in the cell inner membrane. In terms of biological role, involved in the efflux of sugars. The physiological role may be the reduction of the intracellular concentration of toxic sugars or sugar metabolites. The protein is Probable sugar efflux transporter of Mannheimia succiniciproducens (strain KCTC 0769BP / MBEL55E).